The chain runs to 429 residues: 3-phosphoshikimate 1-carboxyvinyltransferase (429 aa).

Residues Lys11, Ser12, and Arg16 each contribute to the 3-phosphoshikimate site. Residue Lys11 participates in phosphoenolpyruvate binding. Gly82 and Arg110 together coordinate phosphoenolpyruvate. Positions 155, 157, 302, and 329 each coordinate 3-phosphoshikimate. Residue Gln157 coordinates phosphoenolpyruvate. The active-site Proton acceptor is Asp302. Phosphoenolpyruvate is bound by residues Arg333 and Arg385.

It belongs to the EPSP synthase family. In terms of assembly, monomer.

It localises to the cytoplasm. It carries out the reaction 3-phosphoshikimate + phosphoenolpyruvate = 5-O-(1-carboxyvinyl)-3-phosphoshikimate + phosphate. It participates in metabolic intermediate biosynthesis; chorismate biosynthesis; chorismate from D-erythrose 4-phosphate and phosphoenolpyruvate: step 6/7. Catalyzes the transfer of the enolpyruvyl moiety of phosphoenolpyruvate (PEP) to the 5-hydroxyl of shikimate-3-phosphate (S3P) to produce enolpyruvyl shikimate-3-phosphate and inorganic phosphate. The sequence is that of 3-phosphoshikimate 1-carboxyvinyltransferase from Helicobacter pylori (strain G27).